The following is a 385-amino-acid chain: Putative actin-25 (385 aa).

It belongs to the actin family.

It localises to the cytoplasm. It is found in the cytoskeleton. The enzyme catalyses ATP + H2O = ADP + phosphate + H(+). In terms of biological role, actins are highly conserved proteins that are involved in various types of cell motility and are ubiquitously expressed in all eukaryotic cells. Multiple isoforms are involved in various cellular functions such as cytoskeleton structure, cell mobility, chromosome movement and muscle contraction. This is Putative actin-25 (act25) from Dictyostelium discoideum (Social amoeba).